The following is a 216-amino-acid chain: 1-Cys peroxiredoxin PER1 (216 aa).

In terms of domain architecture, Thioredoxin spans Ile-4–Met-159. Cys-46 serves as the catalytic Cysteine sulfenic acid (-SOH) intermediate. The Bipartite nuclear localization signal signature appears at Lys-191–Glu-214.

The protein belongs to the peroxiredoxin family. Prx6 subfamily. Predominantly expressed in seed. Expressed in endosperm, embryo and aleurone cells. Also detected in young seedlings, abscission zones, stem branching points.

It localises to the nucleus. The protein localises to the cytoplasm. The catalysed reaction is a hydroperoxide + [thioredoxin]-dithiol = an alcohol + [thioredoxin]-disulfide + H2O. In terms of biological role, thiol-specific peroxidase that catalyzes the reduction of hydrogen peroxide and organic hydroperoxides to water and alcohols, respectively. Seems to contribute to the inhibition of germination during stress. The polypeptide is 1-Cys peroxiredoxin PER1 (PER1) (Arabidopsis thaliana (Mouse-ear cress)).